Consider the following 688-residue polypeptide: Mitochondrial potassium channel ATP-binding subunit (688 aa).

The N-terminal 31 residues, 1-31 (MLFHFLQAGLRQCRPPARLVGLETGLSGARG), are a transit peptide targeting the mitochondrion. A run of 4 helical transmembrane segments spans residues 115-135 (PQLI…LLNI), 168-188 (LKLL…IVLL), 268-288 (GLLL…GSFL), and 342-362 (VLGV…NCIV). One can recognise an ABC transmembrane type-1 domain in the interval 121–409 (LTAVLLAFGA…MSVLFGQVVR (289 aa)). The ABC transporter domain maps to 442–679 (IHFKDVSFSY…GGLYADLIRR (238 aa)). 477–484 (GQSGGGKS) serves as a coordination point for ATP.

Belongs to the ABC transporter superfamily. ABCB family. Multidrug resistance exporter (TC 3.A.1.201) subfamily. In terms of assembly, component of the mitochondrial potassium channel (mitoK(ATP)).

The protein resides in the mitochondrion inner membrane. In terms of biological role, ATP-binding subunit of the mitochondrial ATP-gated potassium channel (mitoK(ATP)). Together with pore-forming subunit CCDC51/MITOK of the mitoK(ATP) channel, mediates ATP-dependent potassium currents across the mitochondrial inner membrane. An increase in ATP intracellular levels closes the channel, inhibiting K(+) transport, whereas a decrease in ATP levels enhances K(+) uptake in the mitochondrial matrix. Plays a role in mitochondrial iron transport. Required for maintenance of normal cardiac function, possibly by influencing mitochondrial iron export and regulating the maturation of cytosolic iron sulfur cluster-containing enzymes. This chain is Mitochondrial potassium channel ATP-binding subunit, found in Xenopus tropicalis (Western clawed frog).